A 224-amino-acid polypeptide reads, in one-letter code: Zinc finger C4H2 domain-containing protein (224 aa).

A coiled-coil region spans residues 11-104 (LESIKEIRNK…RRLHDEYKPL (94 aa)). A C4H2-type zinc finger spans residues 189–206 (CLSCHQQIHRNAPICPLC).

Expressed in fetal tissues, including in brain, intestine, lung, kidney and muscle. Isoform 1 is expressed in numerous fetal brain regions. Isoform 3 is highly expressed in numerous fetal brain regions and spinal cord.

It is found in the cytoplasm. It localises to the nucleus. The protein resides in the postsynaptic cell membrane. Its function is as follows. Plays a role in interneurons differentiation. Involved in neuronal development and in neuromuscular junction formation. This chain is Zinc finger C4H2 domain-containing protein (ZC4H2), found in Homo sapiens (Human).